The primary structure comprises 283 residues: NAD kinase (283 aa).

The Proton acceptor role is filled by Asp-68. Residues 68-69, 142-143, Arg-153, Asp-172, 183-188, and Gln-242 contribute to the NAD(+) site; these read DG, ND, and TAYSLS.

Belongs to the NAD kinase family. A divalent metal cation serves as cofactor.

The protein localises to the cytoplasm. The enzyme catalyses NAD(+) + ATP = ADP + NADP(+) + H(+). In terms of biological role, involved in the regulation of the intracellular balance of NAD and NADP, and is a key enzyme in the biosynthesis of NADP. Catalyzes specifically the phosphorylation on 2'-hydroxyl of the adenosine moiety of NAD to yield NADP. This is NAD kinase from Caldanaerobacter subterraneus subsp. tengcongensis (strain DSM 15242 / JCM 11007 / NBRC 100824 / MB4) (Thermoanaerobacter tengcongensis).